The chain runs to 93 residues: uncharacterized protein (93 aa).

This is an uncharacterized protein from Escherichia coli (strain K12).